We begin with the raw amino-acid sequence, 519 residues long: 2-isopropylmalate synthase (519 aa).

One can recognise a Pyruvate carboxyltransferase domain in the interval 5–267 (VKIFDTTLRD…NTNIRSHEIS (263 aa)). Aspartate 14, histidine 202, histidine 204, and asparagine 238 together coordinate Mn(2+). A regulatory domain region spans residues 392–519 (KLLYLQASSG…KKQQTQTAGV (128 aa)).

This sequence belongs to the alpha-IPM synthase/homocitrate synthase family. LeuA type 1 subfamily. In terms of assembly, homodimer. Mn(2+) is required as a cofactor.

The protein localises to the cytoplasm. It catalyses the reaction 3-methyl-2-oxobutanoate + acetyl-CoA + H2O = (2S)-2-isopropylmalate + CoA + H(+). It participates in amino-acid biosynthesis; L-leucine biosynthesis; L-leucine from 3-methyl-2-oxobutanoate: step 1/4. Catalyzes the condensation of the acetyl group of acetyl-CoA with 3-methyl-2-oxobutanoate (2-ketoisovalerate) to form 3-carboxy-3-hydroxy-4-methylpentanoate (2-isopropylmalate). This is 2-isopropylmalate synthase from Pseudoalteromonas atlantica (strain T6c / ATCC BAA-1087).